The primary structure comprises 236 residues: Large ribosomal subunit protein uL3 (236 aa).

The segment at 215–236 is disordered; that stretch reads PAPEPAAPVAAAAAGTGEEASA. Positions 221 to 236 are enriched in low complexity; the sequence is APVAAAAAGTGEEASA.

This sequence belongs to the universal ribosomal protein uL3 family. As to quaternary structure, part of the 50S ribosomal subunit. Forms a cluster with proteins L14 and L19.

Its function is as follows. One of the primary rRNA binding proteins, it binds directly near the 3'-end of the 23S rRNA, where it nucleates assembly of the 50S subunit. The chain is Large ribosomal subunit protein uL3 from Parafrankia sp. (strain EAN1pec).